Consider the following 442-residue polypeptide: UDP-N-acetylmuramoylalanine--D-glutamate ligase (442 aa).

Residue 113 to 119 (GSNGKTT) coordinates ATP.

Belongs to the MurCDEF family.

The protein localises to the cytoplasm. The catalysed reaction is UDP-N-acetyl-alpha-D-muramoyl-L-alanine + D-glutamate + ATP = UDP-N-acetyl-alpha-D-muramoyl-L-alanyl-D-glutamate + ADP + phosphate + H(+). It functions in the pathway cell wall biogenesis; peptidoglycan biosynthesis. In terms of biological role, cell wall formation. Catalyzes the addition of glutamate to the nucleotide precursor UDP-N-acetylmuramoyl-L-alanine (UMA). The chain is UDP-N-acetylmuramoylalanine--D-glutamate ligase from Coxiella burnetii (strain CbuK_Q154) (Coxiella burnetii (strain Q154)).